The primary structure comprises 422 residues: tRNA(Met) cytidine acetate ligase (422 aa).

ATP-binding positions include 7-20 (ITEY…HLYH), Gly-102, Asn-172, and Arg-197.

It belongs to the TmcAL family.

It is found in the cytoplasm. The enzyme catalyses cytidine(34) in elongator tRNA(Met) + acetate + ATP = N(4)-acetylcytidine(34) in elongator tRNA(Met) + AMP + diphosphate. Functionally, catalyzes the formation of N(4)-acetylcytidine (ac(4)C) at the wobble position of elongator tRNA(Met), using acetate and ATP as substrates. First activates an acetate ion to form acetyladenylate (Ac-AMP) and then transfers the acetyl group to tRNA to form ac(4)C34. The protein is tRNA(Met) cytidine acetate ligase of Halothermothrix orenii (strain H 168 / OCM 544 / DSM 9562).